The chain runs to 351 residues: Peptide chain release factor 1 (351 aa).

Q229 is subject to N5-methylglutamine.

Belongs to the prokaryotic/mitochondrial release factor family. Methylated by PrmC. Methylation increases the termination efficiency of RF1.

It is found in the cytoplasm. Its function is as follows. Peptide chain release factor 1 directs the termination of translation in response to the peptide chain termination codons UAG and UAA. The chain is Peptide chain release factor 1 from Cereibacter sphaeroides (strain ATCC 17025 / ATH 2.4.3) (Rhodobacter sphaeroides).